Consider the following 98-residue polypeptide: Growth-regulated protein homolog gamma (98 aa).

The signal sequence occupies residues 1-29 (MAPAASSAPRLLRAAMLLLLLVAAGRRAA). Intrachain disulfides connect Cys-39–Cys-65 and Cys-41–Cys-81.

Belongs to the intercrine alpha (chemokine CxC) family.

It is found in the secreted. This chain is Growth-regulated protein homolog gamma, found in Bos taurus (Bovine).